The primary structure comprises 89 residues: MAISKEKKNEIIKQFATHEGDTGSTQVQVAVLTADINELNEHLREHKHDYHSQRGLMKKIGHRRNLLAYLRRTDLPAYRELIKALGLRR.

It belongs to the universal ribosomal protein uS15 family. As to quaternary structure, part of the 30S ribosomal subunit. Forms a bridge to the 50S subunit in the 70S ribosome, contacting the 23S rRNA.

In terms of biological role, one of the primary rRNA binding proteins, it binds directly to 16S rRNA where it helps nucleate assembly of the platform of the 30S subunit by binding and bridging several RNA helices of the 16S rRNA. Functionally, forms an intersubunit bridge (bridge B4) with the 23S rRNA of the 50S subunit in the ribosome. The chain is Small ribosomal subunit protein uS15 from Limosilactobacillus fermentum (strain NBRC 3956 / LMG 18251) (Lactobacillus fermentum).